Reading from the N-terminus, the 277-residue chain is Sulfate transport system permease protein CysT (277 aa).

Helical transmembrane passes span 17 to 37 (LGTS…ALVM), 64 to 84 (LLAA…MAWI), 99 to 119 (LMDL…ASLF), 136 to 156 (VTYT…PFVV), 188 to 205 (VVLP…ALSF), 215 to 235 (VIFI…MIFV), and 243 to 263 (PAAS…LFSI). The 204-residue stretch at 60–263 (YKVTLLAAFV…AASLLLLFSI (204 aa)) folds into the ABC transmembrane type-1 domain.

This sequence belongs to the binding-protein-dependent transport system permease family. CysTW subfamily. In terms of assembly, the complex is composed of two ATP-binding proteins (CysA), two transmembrane proteins (CysT and CysW) and a solute-binding protein (CysP).

The protein resides in the cell inner membrane. Functionally, part of the ABC transporter complex CysAWTP (TC 3.A.1.6.1) involved in sulfate/thiosulfate import. Probably responsible for the translocation of the substrate across the membrane. This Salmonella typhimurium (strain LT2 / SGSC1412 / ATCC 700720) protein is Sulfate transport system permease protein CysT (cysU).